The chain runs to 636 residues: Phosphomethylpyrimidine synthase (636 aa).

Positions 48–70 are disordered; the sequence is DDTPTDFGGEKNPPVRVYDTSGP. Residues asparagine 231, methionine 260, tyrosine 289, histidine 325, 345–347, 386–389, and glutamate 425 contribute to the substrate site; these read SRG and DGLR. Histidine 429 provides a ligand contact to Zn(2+). Tyrosine 452 serves as a coordination point for substrate. Residue histidine 493 participates in Zn(2+) binding. [4Fe-4S] cluster contacts are provided by cysteine 573, cysteine 576, and cysteine 581.

This sequence belongs to the ThiC family. Homodimer. [4Fe-4S] cluster is required as a cofactor.

It carries out the reaction 5-amino-1-(5-phospho-beta-D-ribosyl)imidazole + S-adenosyl-L-methionine = 4-amino-2-methyl-5-(phosphooxymethyl)pyrimidine + CO + 5'-deoxyadenosine + formate + L-methionine + 3 H(+). The protein operates within cofactor biosynthesis; thiamine diphosphate biosynthesis. In terms of biological role, catalyzes the synthesis of the hydroxymethylpyrimidine phosphate (HMP-P) moiety of thiamine from aminoimidazole ribotide (AIR) in a radical S-adenosyl-L-methionine (SAM)-dependent reaction. The polypeptide is Phosphomethylpyrimidine synthase (Cellvibrio japonicus (strain Ueda107) (Pseudomonas fluorescens subsp. cellulosa)).